A 48-amino-acid polypeptide reads, in one-letter code: Large ribosomal subunit protein bL33A (48 aa).

The protein belongs to the bacterial ribosomal protein bL33 family.

The polypeptide is Large ribosomal subunit protein bL33A (Exiguobacterium sibiricum (strain DSM 17290 / CCUG 55495 / CIP 109462 / JCM 13490 / 255-15)).